Consider the following 179-residue polypeptide: Arginine repressor (179 aa).

It belongs to the ArgR family.

The protein resides in the cytoplasm. It participates in amino-acid biosynthesis; L-arginine biosynthesis [regulation]. Regulates arginine biosynthesis genes. This is Arginine repressor from Renibacterium salmoninarum (strain ATCC 33209 / DSM 20767 / JCM 11484 / NBRC 15589 / NCIMB 2235).